Consider the following 338-residue polypeptide: Magnesium-chelatase subunit ChlI (338 aa).

G11 to S18 lines the ATP pocket.

Belongs to the Mg-chelatase subunits D/I family.

The catalysed reaction is protoporphyrin IX + Mg(2+) + ATP + H2O = Mg-protoporphyrin IX + ADP + phosphate + 3 H(+). It functions in the pathway porphyrin-containing compound metabolism; chlorophyll biosynthesis. Functionally, involved in chlorophyll biosynthesis; introduces a magnesium ion into protoporphyrin IX to yield Mg-protoporphyrin IX. This Anabaena variabilis protein is Magnesium-chelatase subunit ChlI (chlI).